The primary structure comprises 238 residues: U2 small nuclear ribonucleoprotein A' (238 aa).

3 LRR repeats span residues 53-74 (PTHILDLTNNDLIMIPDLSRRD), 75-95 (DIHTLLLGRNNIVEVDGRLLP), and 97-118 (NVQNLTLSNNSIRRFEDLQRLR). In terms of domain architecture, LRRCT spans 132–170 (NQVCHLANYREHVLRLVPHLETLDFQNVTAEERKSAMSF). The tract at residues 167–189 (AMSFPRQADGDTLGPVNTAIRDN) is disordered.

This sequence belongs to the U2 small nuclear ribonucleoprotein A family. Belongs to the CWC complex (or CEF1-associated complex), a spliceosome sub-complex reminiscent of a late-stage spliceosome composed of the U2, U5 and U6 snRNAs and at least BUD13, BUD31, BRR2, CDC40, CEF1, CLF1, CUS1, CWC2, CWC15, CWC21, CWC22, CWC23, CWC24, CWC25, CWC27, ECM2, HSH155, IST3, ISY1, LEA1, MSL1, NTC20, PRP8, PRP9, PRP11, PRP19, PRP21, PRP22, PRP45, PRP46, SLU7, SMB1, SMD1, SMD2, SMD3, SMX2, SMX3, SNT309, SNU114, SPP2, SYF1, SYF2, RSE1 and YJU2. Interacts with MSL1.

Its subcellular location is the nucleus. Involved in pre-mRNA splicing. Associates to U2 snRNA in a MSL1 dependent manner and is required for normal accumulation of U2 snRNA. Required for the spliceosome assembly and the efficient addition of U2 snRNP onto the pre-mRNA. This is U2 small nuclear ribonucleoprotein A' (LEA1) from Saccharomyces cerevisiae (strain ATCC 204508 / S288c) (Baker's yeast).